Here is a 332-residue protein sequence, read N- to C-terminus: Autoinducer 2 import system permease protein LsrD (332 aa).

The next 7 membrane-spanning stretches (helical) occupy residues 5–25 (LNWE…FGAL), 43–63 (ICIG…GIDI), 83–103 (GWPL…CGLF), 116–136 (LVIT…LSGM), 160–180 (LGGL…FWLL), 210–230 (IPYV…LVMV), and 259–279 (IYGG…VGYL).

Belongs to the binding-protein-dependent transport system permease family. AraH/RbsC subfamily. In terms of assembly, the complex is composed of two ATP-binding proteins (LsrA), two transmembrane proteins (LsrC and LsrD) and a solute-binding protein (LsrB).

The protein localises to the cell inner membrane. Functionally, part of the ABC transporter complex LsrABCD involved in autoinducer 2 (AI-2) import. Probably responsible for the translocation of the substrate across the membrane. The sequence is that of Autoinducer 2 import system permease protein LsrD (lsrD) from Klebsiella pneumoniae subsp. pneumoniae (strain ATCC 700721 / MGH 78578).